Here is a 1388-residue protein sequence, read N- to C-terminus: Dicer-like protein 2 (1388 aa).

Positions 23 to 203 (MLEASMKENI…LLMVESNLDA (181 aa)) constitute a Helicase ATP-binding domain. Position 36–43 (36–43 (MDTGSGKT)) interacts with ATP. The short motif at 144–147 (DEAH) is the DEAH box element. The Helicase C-terminal domain maps to 368–537 (KFESLLNFLD…DDERQLQSVS (170 aa)). A Dicer dsRNA-binding fold domain is found at 564-658 (AMAHLHHFCA…LPLTKKPELK (95 aa)). RNase III domains are found at residues 906–1059 (ISAI…VDGG) and 1098–1281 (NDRL…VDSG). Mg(2+) contacts are provided by E1137, D1267, and E1270.

This sequence belongs to the helicase family. Dicer subfamily. The cofactor is Mg(2+). Mn(2+) is required as a cofactor.

Its function is as follows. Dicer-like endonuclease involved in cleaving double-stranded RNA in the RNA interference (RNAi) pathway. Produces 21 to 25 bp dsRNAs (siRNAs) which target the selective destruction of homologous RNAs leading to sequence-specific suppression of gene expression, called post-transcriptional gene silencing (PTGS). Part of a broad host defense response against viral infection and transposons. This Aspergillus fumigatus (strain ATCC MYA-4609 / CBS 101355 / FGSC A1100 / Af293) (Neosartorya fumigata) protein is Dicer-like protein 2 (dcl2).